Reading from the N-terminus, the 525-residue chain is Arylsulfatase G (525 aa).

Positions 1-16 (MGWLFLKVLLAGVSFS) are cleaved as a signal peptide. Residues Asp-44, Asp-45, and Cys-84 each contribute to the Ca(2+) site. Residue Cys-84 is the Nucleophile of the active site. Cys-84 is modified (3-oxoalanine (Cys)). A glycan (N-linked (GlcNAc...) asparagine) is linked at Asn-117. Lys-137 contacts substrate. His-139 is a catalytic residue. Substrate is bound at residue Ser-162. Asn-215 carries an N-linked (GlcNAc...) asparagine glycan. Residue His-251 participates in substrate binding. 2 residues coordinate Ca(2+): Asp-302 and Asn-303. N-linked (GlcNAc...) asparagine glycans are attached at residues Asn-356 and Asn-497.

It belongs to the sulfatase family. Requires Ca(2+) as cofactor. In terms of processing, N-glycosylated. N-glycosylated with both high mannose and complex type sugars. Post-translationally, the conversion to 3-oxoalanine (also known as C-formylglycine, FGly), of a serine or cysteine residue in prokaryotes and of a cysteine residue in eukaryotes, is critical for catalytic activity. The 63-kDa precursor undergoes proteolytic processing in two steps, yielding two fragments in the first step (apparent molecular masses of 44 and 18 kDa). In the second step, the 44-kDa fragment is processed further to the 34- and 10-kDa chains. The 10-kDa chain is a cleavage product of the 44-kDa fragment but linked to the 18-kDa chain through a disulfide bridge. In terms of tissue distribution, widely expressed, with very low expression in brain, lung, heart and skeletal muscle.

Its subcellular location is the lysosome. It carries out the reaction an aryl sulfate + H2O = a phenol + sulfate + H(+). It catalyses the reaction Hydrolysis of the 3-sulfate groups of the N-sulfo-D-glucosamine 3-O-sulfate units of heparin.. Inhibited by phosphate. The phosphate forms a covalent bond with the active site 3-oxoalanine. Functionally, displays arylsulfatase activity at acidic pH towards artificial substrates, such as p-nitrocatechol sulfate and also, but with a lower activity towards p-nitrophenyl sulfate and 4-methylumbelliferyl sulfate. Catalyzes the hydrolysis of the 3-sulfate groups of the N-sulfo-D-glucosamine 3-O-sulfate units of heparin. This chain is Arylsulfatase G (ARSG), found in Homo sapiens (Human).